A 280-amino-acid polypeptide reads, in one-letter code: Phosphatidylglycerol--prolipoprotein diacylglyceryl transferase (280 aa).

The next 4 helical transmembrane spans lie at Phe-12–Leu-32, Leu-52–Glu-72, Ile-86–Leu-106, and Phe-115–Gly-133. Arg-134 is a binding site for a 1,2-diacyl-sn-glycero-3-phospho-(1'-sn-glycerol). Transmembrane regions (helical) follow at residues Pro-173–Phe-193, Leu-203–Ile-223, and Ile-246–Tyr-266.

Belongs to the Lgt family.

The protein localises to the cell inner membrane. The catalysed reaction is L-cysteinyl-[prolipoprotein] + a 1,2-diacyl-sn-glycero-3-phospho-(1'-sn-glycerol) = an S-1,2-diacyl-sn-glyceryl-L-cysteinyl-[prolipoprotein] + sn-glycerol 1-phosphate + H(+). The protein operates within protein modification; lipoprotein biosynthesis (diacylglyceryl transfer). In terms of biological role, catalyzes the transfer of the diacylglyceryl group from phosphatidylglycerol to the sulfhydryl group of the N-terminal cysteine of a prolipoprotein, the first step in the formation of mature lipoproteins. This is Phosphatidylglycerol--prolipoprotein diacylglyceryl transferase from Synechococcus sp. (strain CC9902).